The chain runs to 206 residues: Thymidylate kinase (206 aa).

11-18 (GIDGAGKT) contributes to the ATP binding site.

It belongs to the thymidylate kinase family.

It catalyses the reaction dTMP + ATP = dTDP + ADP. Functionally, phosphorylation of dTMP to form dTDP in both de novo and salvage pathways of dTTP synthesis. The polypeptide is Thymidylate kinase (Burkholderia mallei (strain NCTC 10247)).